Reading from the N-terminus, the 313-residue chain is MMIWIITISILVSLSSNSWFIFWLMMEINMMSFIPIMNDFKMKNYNSMITYFIIQSFSSSLFFISSFQYSLFNMELFFSLINISVLIKLGMIPFHFWLIMISESLTFYSLLILLTIQKIIPLLIIEKFMNSLMIPLFIMSSLLASIMAMKYKLIKQILIFSSISHQGWILCLIAKKMNFWVSYLMLYSIIIYSIIINCKEMNFNKLCDLTKKKISSKMKNTMIMSMMSLAGMPPFIGFFMKIMAIFFLMKMNLIFMMILIISSLINLFFYLRILTPLFFINSKFSIWSFNNMKSNFMIKINMLLLIILINIFF.

A run of 10 helical transmembrane segments spans residues 3 to 23 (IWII…FIFW), 47 to 67 (SMIT…ISSF), 81 to 101 (INIS…LIMI), 105 to 125 (LTFY…LLII), 128 to 148 (FMNS…SIMA), 153 to 173 (LIKQ…LCLI), 177 to 197 (MNFW…IIIN), 220 to 240 (NTMI…GFFM), 253 to 275 (LIFM…RILT), and 293 to 313 (KSNF…NIFF).

It belongs to the complex I subunit 2 family.

The protein localises to the mitochondrion inner membrane. It carries out the reaction a ubiquinone + NADH + 5 H(+)(in) = a ubiquinol + NAD(+) + 4 H(+)(out). Functionally, core subunit of the mitochondrial membrane respiratory chain NADH dehydrogenase (Complex I) that is believed to belong to the minimal assembly required for catalysis. Complex I functions in the transfer of electrons from NADH to the respiratory chain. The immediate electron acceptor for the enzyme is believed to be ubiquinone. The chain is NADH-ubiquinone oxidoreductase chain 2 (ND2) from Rhipicephalus sanguineus (Brown dog tick).